We begin with the raw amino-acid sequence, 378 residues long: Anhydro-N-acetylmuramic acid kinase (378 aa).

An ATP-binding site is contributed by 9-16; that stretch reads GTSADGID.

Belongs to the anhydro-N-acetylmuramic acid kinase family.

The catalysed reaction is 1,6-anhydro-N-acetyl-beta-muramate + ATP + H2O = N-acetyl-D-muramate 6-phosphate + ADP + H(+). It functions in the pathway amino-sugar metabolism; 1,6-anhydro-N-acetylmuramate degradation. The protein operates within cell wall biogenesis; peptidoglycan recycling. In terms of biological role, catalyzes the specific phosphorylation of 1,6-anhydro-N-acetylmuramic acid (anhMurNAc) with the simultaneous cleavage of the 1,6-anhydro ring, generating MurNAc-6-P. Is required for the utilization of anhMurNAc either imported from the medium or derived from its own cell wall murein, and thus plays a role in cell wall recycling. The polypeptide is Anhydro-N-acetylmuramic acid kinase (Prochlorococcus marinus (strain NATL1A)).